Consider the following 283-residue polypeptide: 5'-nucleotidase SurE 2 (283 aa).

Residues D19, D20, S52, and N110 each contribute to the a divalent metal cation site.

Belongs to the SurE nucleotidase family. A divalent metal cation is required as a cofactor.

It is found in the cytoplasm. The enzyme catalyses a ribonucleoside 5'-phosphate + H2O = a ribonucleoside + phosphate. Functionally, nucleotidase that shows phosphatase activity on nucleoside 5'-monophosphates. The sequence is that of 5'-nucleotidase SurE 2 from Chlamydia caviae (strain ATCC VR-813 / DSM 19441 / 03DC25 / GPIC) (Chlamydophila caviae).